Here is a 169-residue protein sequence, read N- to C-terminus: UPF0316 protein Dde_2502 (169 aa).

A run of 3 helical transmembrane segments spans residues 1-21 (MITAASLLTALAVFIARLCDV), 38-58 (LAFSVAFFEAVIWVYAVSRVI), and 68-88 (LAFALGFASGTYAGITLEGVF).

The protein belongs to the UPF0316 family.

The protein resides in the cell membrane. The sequence is that of UPF0316 protein Dde_2502 from Oleidesulfovibrio alaskensis (strain ATCC BAA-1058 / DSM 17464 / G20) (Desulfovibrio alaskensis).